The following is a 594-amino-acid chain: Elongation factor 4 (594 aa).

The 183-residue stretch at 2–184 (KNIRNFSIIA…TIVAKVPAPE (183 aa)) folds into the tr-type G domain. GTP is bound by residues 14-19 (DHGKST) and 131-134 (NKID).

It belongs to the TRAFAC class translation factor GTPase superfamily. Classic translation factor GTPase family. LepA subfamily.

Its subcellular location is the cell inner membrane. The catalysed reaction is GTP + H2O = GDP + phosphate + H(+). In terms of biological role, required for accurate and efficient protein synthesis under certain stress conditions. May act as a fidelity factor of the translation reaction, by catalyzing a one-codon backward translocation of tRNAs on improperly translocated ribosomes. Back-translocation proceeds from a post-translocation (POST) complex to a pre-translocation (PRE) complex, thus giving elongation factor G a second chance to translocate the tRNAs correctly. Binds to ribosomes in a GTP-dependent manner. The sequence is that of Elongation factor 4 from Francisella tularensis subsp. tularensis (strain FSC 198).